Reading from the N-terminus, the 187-residue chain is Protein GrpE (187 aa).

Residues 1–25 form a disordered region; the sequence is MADEQNLDNRAPEETPAAEGTSAGE.

Belongs to the GrpE family. In terms of assembly, homodimer.

The protein localises to the cytoplasm. Functionally, participates actively in the response to hyperosmotic and heat shock by preventing the aggregation of stress-denatured proteins, in association with DnaK and GrpE. It is the nucleotide exchange factor for DnaK and may function as a thermosensor. Unfolded proteins bind initially to DnaJ; upon interaction with the DnaJ-bound protein, DnaK hydrolyzes its bound ATP, resulting in the formation of a stable complex. GrpE releases ADP from DnaK; ATP binding to DnaK triggers the release of the substrate protein, thus completing the reaction cycle. Several rounds of ATP-dependent interactions between DnaJ, DnaK and GrpE are required for fully efficient folding. The polypeptide is Protein GrpE (Azotobacter vinelandii (strain DJ / ATCC BAA-1303)).